The primary structure comprises 377 residues: Presenilin-associated rhomboid-like protein, mitochondrial (377 aa).

The N-terminal 50 residues, 1–50 (MALYSWVQRGWRCGQTWAPLLGGGYRELSATQARQLLGRRFNLLLQQKCG), are a transit peptide targeting the mitochondrion. Over 51–95 (FRKAPRKVEPRRSDTGSSGEAYKRSALIPPLEETVFYPSPYPVRT) the chain is Mitochondrial matrix. A phosphoserine mark is found at Ser63 and Ser68. Residues 96–116 (LLKPFFFTVGFTGCAFGSAAI) form a helical membrane-spanning segment. Over 117 to 165 (WQYESLKSRVQSYFDGIKADWLDSIRPQKEGNLRKEINKWWNSLSDGQR) the chain is Mitochondrial intermembrane. Residues 166-186 (TVTGIIAANALVFCLWRVPSL) traverse the membrane as a helical segment. Residues 187 to 214 (HRTMIRYFTSNPASKVLCSPMLLSTFSH) are Mitochondrial matrix-facing. The helical transmembrane segment at 215–235 (FSLFHMAANMYVLWSFSTSIV) threads the bilayer. Topologically, residues 236–242 (NILGQEQ) are mitochondrial intermembrane. The helical transmembrane segment at 243–263 (FVAVYLSAGVISNFVSYVCKV) threads the bilayer. The Mitochondrial matrix segment spans residues 264–268 (ATGRY). The helical transmembrane segment at 269–289 (GPSLGASGAIMTVLAAVCTKI) threads the bilayer. The Nucleophile role is filled by Ser275. The Mitochondrial intermembrane portion of the chain corresponds to 290–293 (PEGR). Residues 294 to 314 (LAIIFLPVFTFTAGNALKAII) form a helical membrane-spanning segment. The Mitochondrial matrix segment spans residues 315–331 (AMDTAGMILGWKFFDHA). A helical membrane pass occupies residues 332–352 (AHLGGALFGIWYITYGHELIW). Residue His333 is part of the active site. Residues 353-377 (KNREPLVKIWHEIRTNGPKKGGGSK) lie on the Mitochondrial intermembrane side of the membrane.

The protein belongs to the peptidase S54 family. Interacts with PSEN1 and PSEN2. Binds OPA1. P-beta is proteolytically processed (beta-cleavage) in a PARL-dependent manner.

The protein resides in the mitochondrion inner membrane. Its subcellular location is the nucleus. The catalysed reaction is Cleaves type-1 transmembrane domains using a catalytic dyad composed of serine and histidine that are contributed by different transmembrane domains.. Functionally, required for the control of apoptosis during postnatal growth. Essential for proteolytic processing of an antiapoptotic form of OPA1 which prevents the release of mitochondrial cytochrome c in response to intrinsic apoptotic signals. Required for the maturation of PINK1 into its 52kDa mature form after its cleavage by mitochondrial-processing peptidase (MPP). Promotes cleavage of serine/threonine-protein phosphatase PGAM5 in damaged mitochondria in response to loss of mitochondrial membrane potential. Mediates differential cleavage of PINK1 and PGAM5 depending on the health status of mitochondria, disassociating from PINK1 and associating with PGAM5 in response to mitochondrial membrane potential loss. Required for processing of CLPB into a form with higher protein disaggregase activity by removing an autoinhibitory N-terminal peptide. Promotes processing of DIABLO/SMAC in the mitochondrion which is required for DIABLO apoptotic activity. Also required for cleavage of STARD7 and TTC19. Promotes changes in mitochondria morphology regulated by phosphorylation of P-beta domain. This Rattus norvegicus (Rat) protein is Presenilin-associated rhomboid-like protein, mitochondrial.